Reading from the N-terminus, the 286-residue chain is Elongation factor Ts (286 aa).

An involved in Mg(2+) ion dislocation from EF-Tu region spans residues 82-85 (TDFV).

The protein belongs to the EF-Ts family.

It is found in the cytoplasm. In terms of biological role, associates with the EF-Tu.GDP complex and induces the exchange of GDP to GTP. It remains bound to the aminoacyl-tRNA.EF-Tu.GTP complex up to the GTP hydrolysis stage on the ribosome. The polypeptide is Elongation factor Ts (Desulfovibrio desulfuricans (strain ATCC 27774 / DSM 6949 / MB)).